Consider the following 234-residue polypeptide: Large ribosomal subunit protein uL1 (234 aa).

This sequence belongs to the universal ribosomal protein uL1 family. As to quaternary structure, part of the 50S ribosomal subunit.

Functionally, binds directly to 23S rRNA. The L1 stalk is quite mobile in the ribosome, and is involved in E site tRNA release. Its function is as follows. Protein L1 is also a translational repressor protein, it controls the translation of the L11 operon by binding to its mRNA. This is Large ribosomal subunit protein uL1 from Aliivibrio fischeri (strain MJ11) (Vibrio fischeri).